A 1689-amino-acid polypeptide reads, in one-letter code: Cullin-7 (1689 aa).

A CPH domain is found at 349 to 422; sequence RASFASFNTY…HWHMLEILGF (74 aa). In terms of domain architecture, DOC spans 793–972; it reads PIQIPFFDVF…HTRLFYMVRA (180 aa). Residues 1321–1337 show a composition bias toward basic and acidic residues; the sequence is VAHEDSGREDKSKKEEA. A disordered region spans residues 1321–1371; it reads VAHEDSGREDKSKKEEAIGEAAAVAMAEEEDQGKKEEGEEEGEGEDEEEER. A compositionally biased stretch (acidic residues) spans 1358-1370; sequence GEEEGEGEDEEEE. Residue lysine 1567 forms a Glycyl lysine isopeptide (Lys-Gly) (interchain with G-Cter in NEDD8) linkage.

This sequence belongs to the cullin family. As to quaternary structure, component of the 3M complex, composed of core components CUL7, CCDC8 and OBSL1. Component of the Cul7-RING(FBXW8) complex consisting of CUL7, RBX1, SKP1 and FBXW8. Within the Cul7-RING(FBXW8) complex interacts with FBXW8 and RBX1, but not with SKP1. Interacts with CUL1 (via the C-terminal domain); the interaction seems to be mediated by FBXW8; it is likely specific to FBXW8, but not other F-box proteins. Interacts (via the CPH domain) with p53/TP53; the interaction preferentially involves tetrameric and dimeric p53/TP53; this interaction recruits p53/TP53 for ubiquitination by neddylated CUL1-RBX1. The CUL7-CUL9 heterodimer seems to interact specifically with p53/TP53. Interacts with FBXW8; interaction is mutually exclusive of binding to CUL9 or p53/TP53. Interacts with CUL9; leading to inhibited CUL9 activity. Interacts with OBSL1. Interacts (as part of the 3M complex) with HDAC4 and HDAC5; it is negatively regulated by ANKRA2.

It localises to the cytoplasm. Its subcellular location is the cytoskeleton. The protein resides in the microtubule organizing center. It is found in the centrosome. The protein localises to the perinuclear region. It localises to the golgi apparatus. It functions in the pathway protein modification; protein ubiquitination. Functionally, core component of the 3M and Cul7-RING(FBXW8) complexes, which mediate the ubiquitination and subsequent proteasomal degradation of target proteins. Core component of the 3M complex, a complex required to regulate microtubule dynamics and genome integrity. It is unclear how the 3M complex regulates microtubules, it could act by controlling the level of a microtubule stabilizer. The Cul7-RING(FBXW8) complex alone lacks ubiquitination activity and does not promote polyubiquitination and proteasomal degradation of p53/TP53. However it mediates recruitment of p53/TP53 for ubiquitination by neddylated CUL1-RBX1. Interaction with CUL9 is required to inhibit CUL9 activity and ubiquitination of BIRC5. The Cul7-RING(FBXW8) complex also mediates ubiquitination and consequent degradation of target proteins such as GORASP1, IRS1 and MAP4K1/HPK1. Ubiquitination of GORASP1 regulates Golgi morphogenesis and dendrite patterning in brain. Mediates ubiquitination and degradation of IRS1 in a mTOR-dependent manner: the Cul7-RING(FBXW8) complex recognizes and binds IRS1 previously phosphorylated by S6 kinase (RPS6KB1 or RPS6KB2). The Cul7-RING(FBXW8) complex also mediates ubiquitination of MAP4K1/HPK1: recognizes and binds autophosphorylated MAP4K1/HPK1, leading to its degradation, thereby affecting cell proliferation and differentiation. Acts as a regulator in trophoblast cell epithelial-mesenchymal transition and placental development. While the Cul7-RING(FBXW8) and the 3M complexes are associated and involved in common processes, CUL7 and the Cul7-RING(FBXW8) complex may have additional functions. Probably plays a role in the degradation of proteins involved in endothelial proliferation and/or differentiation. The protein is Cullin-7 (Cul7) of Mus musculus (Mouse).